Here is an 895-residue protein sequence, read N- to C-terminus: Probable inorganic carbon transporter subunit DabA 1 (895 aa).

The Zn(2+) site is built by Cys-398, Asp-400, His-581, and Cys-596.

This sequence belongs to the inorganic carbon transporter (TC 9.A.2) DabA family. Forms a complex with DabB. Zn(2+) is required as a cofactor.

It localises to the cell inner membrane. Part of an energy-coupled inorganic carbon pump. This is Probable inorganic carbon transporter subunit DabA 1 from Rhodopirellula baltica (strain DSM 10527 / NCIMB 13988 / SH1).